We begin with the raw amino-acid sequence, 72 residues long: Translation initiation factor IF-1 (72 aa).

The S1-like domain maps to 1-72 (MSKTDVVEIE…TKGRIIWRDK (72 aa)).

It belongs to the IF-1 family. As to quaternary structure, component of the 30S ribosomal translation pre-initiation complex which assembles on the 30S ribosome in the order IF-2 and IF-3, IF-1 and N-formylmethionyl-tRNA(fMet); mRNA recruitment can occur at any time during PIC assembly.

The protein localises to the cytoplasm. Its function is as follows. One of the essential components for the initiation of protein synthesis. Stabilizes the binding of IF-2 and IF-3 on the 30S subunit to which N-formylmethionyl-tRNA(fMet) subsequently binds. Helps modulate mRNA selection, yielding the 30S pre-initiation complex (PIC). Upon addition of the 50S ribosomal subunit IF-1, IF-2 and IF-3 are released leaving the mature 70S translation initiation complex. This Lachnoclostridium phytofermentans (strain ATCC 700394 / DSM 18823 / ISDg) (Clostridium phytofermentans) protein is Translation initiation factor IF-1.